The chain runs to 704 residues: Elongation factor G (704 aa).

The tr-type G domain occupies D8 to V291. GTP contacts are provided by residues A17–T24, D90–H94, and N144–D147.

It belongs to the TRAFAC class translation factor GTPase superfamily. Classic translation factor GTPase family. EF-G/EF-2 subfamily.

Its subcellular location is the cytoplasm. In terms of biological role, catalyzes the GTP-dependent ribosomal translocation step during translation elongation. During this step, the ribosome changes from the pre-translocational (PRE) to the post-translocational (POST) state as the newly formed A-site-bound peptidyl-tRNA and P-site-bound deacylated tRNA move to the P and E sites, respectively. Catalyzes the coordinated movement of the two tRNA molecules, the mRNA and conformational changes in the ribosome. This chain is Elongation factor G, found in Chlorobaculum parvum (strain DSM 263 / NCIMB 8327) (Chlorobium vibrioforme subsp. thiosulfatophilum).